The following is a 479-amino-acid chain: Aspartyl/glutamyl-tRNA(Asn/Gln) amidotransferase subunit B (479 aa).

The protein belongs to the GatB/GatE family. GatB subfamily. As to quaternary structure, heterotrimer of A, B and C subunits.

It carries out the reaction L-glutamyl-tRNA(Gln) + L-glutamine + ATP + H2O = L-glutaminyl-tRNA(Gln) + L-glutamate + ADP + phosphate + H(+). It catalyses the reaction L-aspartyl-tRNA(Asn) + L-glutamine + ATP + H2O = L-asparaginyl-tRNA(Asn) + L-glutamate + ADP + phosphate + 2 H(+). In terms of biological role, allows the formation of correctly charged Asn-tRNA(Asn) or Gln-tRNA(Gln) through the transamidation of misacylated Asp-tRNA(Asn) or Glu-tRNA(Gln) in organisms which lack either or both of asparaginyl-tRNA or glutaminyl-tRNA synthetases. The reaction takes place in the presence of glutamine and ATP through an activated phospho-Asp-tRNA(Asn) or phospho-Glu-tRNA(Gln). The chain is Aspartyl/glutamyl-tRNA(Asn/Gln) amidotransferase subunit B from Mycoplasma capricolum subsp. capricolum (strain California kid / ATCC 27343 / NCTC 10154).